The chain runs to 185 residues: Elongation factor P (185 aa).

This sequence belongs to the elongation factor P family.

The protein resides in the cytoplasm. The protein operates within protein biosynthesis; polypeptide chain elongation. In terms of biological role, involved in peptide bond synthesis. Stimulates efficient translation and peptide-bond synthesis on native or reconstituted 70S ribosomes in vitro. Probably functions indirectly by altering the affinity of the ribosome for aminoacyl-tRNA, thus increasing their reactivity as acceptors for peptidyl transferase. The sequence is that of Elongation factor P from Halalkalibacterium halodurans (strain ATCC BAA-125 / DSM 18197 / FERM 7344 / JCM 9153 / C-125) (Bacillus halodurans).